A 374-amino-acid chain; its full sequence is Queuine tRNA-ribosyltransferase (374 aa).

Residue aspartate 89 is the Proton acceptor of the active site. Residues 89-93 (DSGGF), aspartate 143, glutamine 187, and glycine 214 each bind substrate. The segment at 245 to 251 (GVGKPED) is RNA binding. Aspartate 264 serves as the catalytic Nucleophile. An RNA binding; important for wobble base 34 recognition region spans residues 269–273 (TRNAR). Zn(2+) is bound by residues cysteine 302, cysteine 304, cysteine 307, and histidine 333.

Belongs to the queuine tRNA-ribosyltransferase family. In terms of assembly, homodimer. Within each dimer, one monomer is responsible for RNA recognition and catalysis, while the other monomer binds to the replacement base PreQ1. It depends on Zn(2+) as a cofactor.

It catalyses the reaction 7-aminomethyl-7-carbaguanine + guanosine(34) in tRNA = 7-aminomethyl-7-carbaguanosine(34) in tRNA + guanine. It functions in the pathway tRNA modification; tRNA-queuosine biosynthesis. Functionally, catalyzes the base-exchange of a guanine (G) residue with the queuine precursor 7-aminomethyl-7-deazaguanine (PreQ1) at position 34 (anticodon wobble position) in tRNAs with GU(N) anticodons (tRNA-Asp, -Asn, -His and -Tyr). Catalysis occurs through a double-displacement mechanism. The nucleophile active site attacks the C1' of nucleotide 34 to detach the guanine base from the RNA, forming a covalent enzyme-RNA intermediate. The proton acceptor active site deprotonates the incoming PreQ1, allowing a nucleophilic attack on the C1' of the ribose to form the product. After dissociation, two additional enzymatic reactions on the tRNA convert PreQ1 to queuine (Q), resulting in the hypermodified nucleoside queuosine (7-(((4,5-cis-dihydroxy-2-cyclopenten-1-yl)amino)methyl)-7-deazaguanosine). This is Queuine tRNA-ribosyltransferase from Shewanella baltica (strain OS223).